The chain runs to 184 residues: MAHLVWMLGENGEEKSFENPNELLPLSRLEEIGVLYWHLDPKKSESEEELTKIRRERGYSYFDLTEICPDKLENYEEKLKSFYCEHIHADEEIRYCLEGSGYFDVRDKDDKWIRIWIKEGDMIILPAGIYHRFIVDSNNYIKLMRLFIGEPVWTAYNRPQEDHPVRQEYVKNVKGDTGFALAAH.

Histidine 86, histidine 88, glutamate 92, and histidine 131 together coordinate Fe(2+). Ni(2+)-binding residues include histidine 86, histidine 88, glutamate 92, and histidine 131.

It belongs to the acireductone dioxygenase (ARD) family. Fe(2+) serves as cofactor. The cofactor is Ni(2+).

Its subcellular location is the cytoplasm. It localises to the nucleus. It carries out the reaction 1,2-dihydroxy-5-(methylsulfanyl)pent-1-en-3-one + O2 = 4-methylsulfanyl-2-oxobutanoate + formate + 2 H(+). It catalyses the reaction 1,2-dihydroxy-5-(methylsulfanyl)pent-1-en-3-one + O2 = 3-(methylsulfanyl)propanoate + CO + formate + 2 H(+). The protein operates within amino-acid biosynthesis; L-methionine biosynthesis via salvage pathway; L-methionine from S-methyl-5-thio-alpha-D-ribose 1-phosphate: step 5/6. Catalyzes 2 different reactions between oxygen and the acireductone 1,2-dihydroxy-3-keto-5-methylthiopentene (DHK-MTPene) depending upon the metal bound in the active site. Fe-containing acireductone dioxygenase (Fe-ARD) produces formate and 2-keto-4-methylthiobutyrate (KMTB), the alpha-ketoacid precursor of methionine in the methionine recycle pathway. Ni-containing acireductone dioxygenase (Ni-ARD) produces methylthiopropionate, carbon monoxide and formate, and does not lie on the methionine recycle pathway. The sequence is that of Acireductone dioxygenase 4 (ARD4) from Oryza sativa subsp. japonica (Rice).